The chain runs to 76 residues: MENKLSFEEAISQLEHLVSKLEQGDVPLEEAISYFKEGMELSKLCDEKLKNVQEQMAVILGEDGELEPFTAVGDEA.

The protein belongs to the XseB family. As to quaternary structure, heterooligomer composed of large and small subunits.

The protein localises to the cytoplasm. The enzyme catalyses Exonucleolytic cleavage in either 5'- to 3'- or 3'- to 5'-direction to yield nucleoside 5'-phosphates.. Functionally, bidirectionally degrades single-stranded DNA into large acid-insoluble oligonucleotides, which are then degraded further into small acid-soluble oligonucleotides. The sequence is that of Exodeoxyribonuclease 7 small subunit from Bacillus cereus (strain G9842).